The following is a 217-amino-acid chain: Probable transaldolase (217 aa).

The Schiff-base intermediate with substrate role is filled by Lys83.

Belongs to the transaldolase family. Type 3B subfamily.

The protein resides in the cytoplasm. The catalysed reaction is D-sedoheptulose 7-phosphate + D-glyceraldehyde 3-phosphate = D-erythrose 4-phosphate + beta-D-fructose 6-phosphate. The protein operates within carbohydrate degradation; pentose phosphate pathway; D-glyceraldehyde 3-phosphate and beta-D-fructose 6-phosphate from D-ribose 5-phosphate and D-xylulose 5-phosphate (non-oxidative stage): step 2/3. Functionally, transaldolase is important for the balance of metabolites in the pentose-phosphate pathway. This chain is Probable transaldolase, found in Sinorhizobium medicae (strain WSM419) (Ensifer medicae).